The sequence spans 280 residues: P32 adhesin (280 aa).

The next 2 helical transmembrane spans lie at 13 to 37 (FIVLALLFTTILIVSLSLLAFALVV) and 68 to 92 (WFIPTVAGSFGFSALAIILGLAIGL). A compositionally biased stretch (polar residues) spans 114-128 (EQLQRISDQQEQQTV). Disordered regions lie at residues 114–149 (EQLQRISDQQEQQTVEIDPQQSQAQPSQPQVQQPLQ) and 163–280 (FNPN…GLKP). Low complexity-rich tracts occupy residues 132–149 (PQQSQAQPSQPQVQQPLQ) and 168–188 (QQRPGFNQPNQQFQPHNNFNP). 13 consecutive repeat copies span residues 163 to 168 (FNPNMQ), 170 to 174 (RPGFN), 186 to 190 (FNPRM), 191 to 195 (NPNMQ), 196 to 200 (RPGFN), 199 to 204 (FNPNMQ), 206 to 210 (RPGFN), 222 to 226 (FNPRM), 227 to 231 (NPNMQ), 232 to 236 (RPGFN), 249 to 254 (FNPNMQ), 256 to 260 (RPGFN), and 259 to 264 (FNPNMQ). Residues 163-264 (FNPNMQQRPG…QRPGFNPNMQ (102 aa)) are 6 X 5 AA repeats of [FM]-N-P-N-M-Q. A 5 X 5 AA repeats of R-P-G-F-N region spans residues 170 to 260 (RPGFNQPNQQ…PNMQQRPGFN (91 aa)). A 2 X 5 AA repeats of F-N-P-R-M region spans residues 186-226 (FNPRMNPNMQRPGFNPNMQQRPGFNQPNQQFQPHNNFNPRM). Over residues 204 to 224 (QQRPGFNQPNQQFQPHNNFNP) the composition is skewed to low complexity. Residues 235-257 (FNQPHPNQFAQPNNFNPNMQQRP) are compositionally biased toward low complexity. Residues 261–271 (PNMQQRPNPSQ) show a composition bias toward polar residues.

The protein localises to the cell projection. The protein resides in the attachment organelle membrane. In terms of biological role, adhesin necessary for successful cytadherence and virulence. This chain is P32 adhesin, found in Mycoplasma genitalium (strain ATCC 33530 / DSM 19775 / NCTC 10195 / G37) (Mycoplasmoides genitalium).